Reading from the N-terminus, the 65-residue chain is Large ribosomal subunit protein uL29 (65 aa).

The protein belongs to the universal ribosomal protein uL29 family.

This is Large ribosomal subunit protein uL29 (rpmC) from Xylella fastidiosa (strain 9a5c).